A 116-amino-acid polypeptide reads, in one-letter code: Promotilin (116 aa).

Positions 1-25 are cleaved as a signal peptide; it reads MVSRKAVAVLLMVHVAVMLASQTEA. Positions 39-74 are disordered; the sequence is REKERNKGQKKSLIVQQRSEEVGPLDPVEPPEEEEN.

It belongs to the motilin family.

It is found in the secreted. In terms of biological role, plays an important role in the regulation of interdigestive gastrointestinal motility and indirectly causes rhythmic contraction of duodenal and colonic smooth muscle. This Felis catus (Cat) protein is Promotilin (MLN).